A 54-amino-acid polypeptide reads, in one-letter code: Large ribosomal subunit protein bL33A (54 aa).

Belongs to the bacterial ribosomal protein bL33 family.

This Mycolicibacterium gilvum (strain PYR-GCK) (Mycobacterium gilvum (strain PYR-GCK)) protein is Large ribosomal subunit protein bL33A.